We begin with the raw amino-acid sequence, 591 residues long: ATPase family AAA domain-containing protein 3A (591 aa).

The disordered stretch occupies residues 1–52; the sequence is MSWLFGIKGPKGEGTGPPLPLPPAQPGAESGGDRGAGDRPSPKDKWSNFDPT. Serine 2 bears the N-acetylserine mark. The required for interaction with the inner surface of the mitochondrial outer membrane stretch occupies residues 2–49; the sequence is SWLFGIKGPKGEGTGPPLPLPPAQPGAESGGDRGAGDRPSPKDKWSNF. Topologically, residues 2 to 245 are mitochondrial intermembrane; it reads SWLFGIKGPK…FRAFVTDWDK (244 aa). Residues 31 to 47 show a composition bias toward basic and acidic residues; that stretch reads GGDRGAGDRPSPKDKWS. Residues 55-216 are a coiled coil; the sequence is ERAAKAAREL…REQIRLKAAE (162 aa). A helical transmembrane segment spans residues 246–263; it reads VTATVAGLTLLAVGVYSA. Residues 264 to 591 are Mitochondrial matrix-facing; that stretch reads KNATSVAGRY…KPPHPSLLSC (328 aa). The segment at 289 to 304 is S100B-binding; the sequence is RISVLEALRHPIQVSR. 351–358 lines the ATP pocket; it reads GPPGTGKT. Residue lysine 490 is modified to N6-acetyllysine; alternate. Lysine 490 carries the post-translational modification N6-succinyllysine; alternate. 2 positions are modified to N6-acetyllysine: lysine 494 and lysine 512.

It belongs to the AAA ATPase family. In terms of assembly, can form homooligomers. Homodimer formation at the N-terminus may be regulated by ATP and is required for the interaction with the inner surface of the mitochondrial outer membrane and correct mitochondrial homeostasis. Interacts with components of the mitochondrial ribosome and with other proteins involved in mitochondrial RNA metabolism. May also interact with protein involved in lipid metabolism, including STARD9. May interact with FAM210A. Interacts with GADD45GIP1. Interacts with S100B in a Ca(+2)- and Zn(+2)-dependent manner; this interaction probably occurs in the cytosol prior to mitochondrial targeting. S100B could assist ATAD3A cytoplasmic processing, preventing aggregation and favoring mitochondrial localization. Interacts with HSP60/HSPD1. Interacts with CLPB. Interacts with EIF2AK3/PERK; ATAD3A and EIF2S1/eIF-2-alpha occupy a common binding site within the cytoplasmic loop of EIF2AK3/PERK, leading to prevent EIF2AK3/PERK association with its substrate EIF2S1/eIF-2-alpha.

It is found in the mitochondrion inner membrane. The protein resides in the mitochondrion matrix. The protein localises to the mitochondrion nucleoid. It carries out the reaction ATP + H2O = ADP + phosphate + H(+). Essential for mitochondrial network organization, mitochondrial metabolism and cell growth at organism and cellular level. May play an important role in mitochondrial protein synthesis. May also participate in mitochondrial DNA replication. May bind to mitochondrial DNA D-loops and contribute to nucleoid stability. Required for enhanced channeling of cholesterol for hormone-dependent steroidogenesis. Involved in mitochondrial-mediated antiviral innate immunity. Required to protect mitochondria from the PERK-mediated unfolded protein response: specifically inhibits the activity of EIF2AK3/PERK at mitochondria-endoplasmic reticulum contact sites, thereby providing a safe haven for mitochondrial protein translation during endoplasmic reticulum stress. Ability to inhibit EIF2AK3/PERK is independent of its ATPase activity. Also involved in the mitochondrial DNA damage response by promoting signaling between damaged genomes and the mitochondrial membrane, leading to activation of the integrated stress response (ISR). This is ATPase family AAA domain-containing protein 3A (Atad3a) from Rattus norvegicus (Rat).